The sequence spans 155 residues: Ribosome maturation factor RimP (155 aa).

The protein belongs to the RimP family.

It is found in the cytoplasm. Its function is as follows. Required for maturation of 30S ribosomal subunits. The sequence is that of Ribosome maturation factor RimP from Desulforapulum autotrophicum (strain ATCC 43914 / DSM 3382 / VKM B-1955 / HRM2) (Desulfobacterium autotrophicum).